Reading from the N-terminus, the 555-residue chain is Synaptotagmin-14 (555 aa).

Residues 1–24 are Extracellular-facing; the sequence is MAIEGGERTCGVHELICIRKVSPE. The helical; Signal-anchor for type III membrane protein transmembrane segment at 25-47 threads the bilayer; the sequence is AVGFLSAVGVFIVLMLLLFLYIN. The Cytoplasmic segment spans residues 48-555; the sequence is KKFCFENVGG…VCRWHALLES (508 aa). 3 disordered regions span residues 76-97, 157-179, and 205-258; these read YNSY…EALG, TPPL…HLSC, and CPSE…PEPE. Residues 211–224 show a composition bias toward basic and acidic residues; it reads TGHEAESYHNKGYE. C2 domains are found at residues 260-379 and 415-550; these read KYGT…SLPV and SVPE…CRWH.

It belongs to the synaptotagmin family. In terms of assembly, homodimer. Can also form heterodimers. In terms of tissue distribution, expressed in heart and testis. Expressed in brain (especially in the cerebellum).

Its subcellular location is the membrane. Its function is as follows. May be involved in the trafficking and exocytosis of secretory vesicles in non-neuronal tissues. Is Ca(2+)-independent. The polypeptide is Synaptotagmin-14 (Syt14) (Mus musculus (Mouse)).